We begin with the raw amino-acid sequence, 83 residues long: Sec-independent protein translocase protein TatA (83 aa).

A helical transmembrane segment spans residues 1–21 (MGGLSLPHLIVLALVVLILFG). Residues 34–83 (KGIKSFKQGMNDEDSKPVTPPPAQIPPASLQQTPPPAQPAPQPTSTDQAQ) are disordered. Pro residues predominate over residues 66–75 (TPPPAQPAPQ).

It belongs to the TatA/E family. As to quaternary structure, the Tat system comprises two distinct complexes: a TatABC complex, containing multiple copies of TatA, TatB and TatC subunits, and a separate TatA complex, containing only TatA subunits. Substrates initially bind to the TatABC complex, which probably triggers association of the separate TatA complex to form the active translocon.

The protein resides in the cell inner membrane. Functionally, part of the twin-arginine translocation (Tat) system that transports large folded proteins containing a characteristic twin-arginine motif in their signal peptide across membranes. TatA could form the protein-conducting channel of the Tat system. The chain is Sec-independent protein translocase protein TatA from Novosphingobium aromaticivorans (strain ATCC 700278 / DSM 12444 / CCUG 56034 / CIP 105152 / NBRC 16084 / F199).